The following is a 177-amino-acid chain: Large ribosomal subunit protein uL6 (177 aa).

Belongs to the universal ribosomal protein uL6 family. Part of the 50S ribosomal subunit.

In terms of biological role, this protein binds to the 23S rRNA, and is important in its secondary structure. It is located near the subunit interface in the base of the L7/L12 stalk, and near the tRNA binding site of the peptidyltransferase center. This chain is Large ribosomal subunit protein uL6, found in Rickettsia akari (strain Hartford).